We begin with the raw amino-acid sequence, 387 residues long: 3-ketoacyl-CoA thiolase (387 aa).

The Acyl-thioester intermediate role is filled by C91. Residues H343 and C373 each act as proton acceptor in the active site.

The protein belongs to the thiolase-like superfamily. Thiolase family. As to quaternary structure, heterotetramer of two alpha chains (FadB) and two beta chains (FadA).

It localises to the cytoplasm. It catalyses the reaction an acyl-CoA + acetyl-CoA = a 3-oxoacyl-CoA + CoA. It participates in lipid metabolism; fatty acid beta-oxidation. Its function is as follows. Catalyzes the final step of fatty acid oxidation in which acetyl-CoA is released and the CoA ester of a fatty acid two carbons shorter is formed. This chain is 3-ketoacyl-CoA thiolase, found in Pectobacterium carotovorum subsp. carotovorum (strain PC1).